The following is a 258-amino-acid chain: MLLVIDVGNTNTVLGIYHEGELEYHWRIETSRHKTEDEFGMLLRSLFDYVGLMFDQIEGIIISSVVPPIMFSLERMCIKYFQIEPQIVGPGMKTGLNIKYDNPKEVGADRIVNAVAAIHLYGSPLIVVDFGTATTYCYINERKEYMGGAIAPGITISTEALYSRAAKLPRIEIARPDHIVGKSTVSAMQSGILYGYVGQVEGIVKRMKWQSKKNPKVIATGGLASLIADESDCIDIVDPFLTLKGLELIYERNRVESV.

ATP is bound at residue 6 to 13 (DVGNTNTV). Residues Y100 and 107–110 (GADR) each bind substrate. Catalysis depends on D109, which acts as the Proton acceptor. Residue D129 participates in K(+) binding. T132 provides a ligand contact to ATP. T184 serves as a coordination point for substrate.

It belongs to the type III pantothenate kinase family. In terms of assembly, homodimer. NH4(+) serves as cofactor. The cofactor is K(+).

The protein localises to the cytoplasm. It carries out the reaction (R)-pantothenate + ATP = (R)-4'-phosphopantothenate + ADP + H(+). It functions in the pathway cofactor biosynthesis; coenzyme A biosynthesis; CoA from (R)-pantothenate: step 1/5. Catalyzes the phosphorylation of pantothenate (Pan), the first step in CoA biosynthesis. The protein is Type III pantothenate kinase of Bacillus licheniformis (strain ATCC 14580 / DSM 13 / JCM 2505 / CCUG 7422 / NBRC 12200 / NCIMB 9375 / NCTC 10341 / NRRL NRS-1264 / Gibson 46).